The sequence spans 515 residues: Dimethylnonatriene synthase (515 aa).

Residues phenylalanine 3 to isoleucine 23 traverse the membrane as a helical segment. Histidine 219 lines the substrate pocket. A Glycyl lysine isopeptide (Lys-Gly) (interchain with G-Cter in ubiquitin) cross-link involves residue lysine 252. Position 452 (cysteine 452) interacts with heme.

Belongs to the cytochrome P450 family. It depends on heme as a cofactor. In terms of tissue distribution, expressed in stems, flower peduncles, receptacle of developing and mature flowers and in stigma of mature opening flower buds.

The protein localises to the membrane. The enzyme catalyses (3S,6E)-nerolidol + reduced [NADPH--hemoprotein reductase] + O2 = (3E)-4,8-dimethylnona-1,3,7-triene + but-3-en-2-one + oxidized [NADPH--hemoprotein reductase] + 2 H2O + H(+). It catalyses the reaction (6E,10E)-geranyllinalool + reduced [NADPH--hemoprotein reductase] + O2 = (3E,7E)-4,8,12-trimethyltrideca 1,3,7,11-tetraene + but-3-en-2-one + oxidized [NADPH--hemoprotein reductase] + 2 H2O + H(+). Its pathway is secondary metabolite biosynthesis; terpenoid biosynthesis. In terms of biological role, involved in the biosynthesis of homoterpenes, attractants of herbivores parasitoids and predators (e.g. predatory mites and parasitoid wasps). Catalyzes the conversion of the C20 (E,E)-geranyllinalool to C16-homoterpene 4,8,12-trimethyltrideca-1,3,7,11-tetraene (TMTT) of the C15 (E)-nerolidol to C11-homoterpene (E)-4,8-dimethyl-1,3,7-nonatriene (DMNT); these volatile compounds are produced upon insect herbivore attack and emitted from flowers and vegetative tissues during herbivore feeding. Required during resistance responses to the fungus Alternaria brassicae. Prevents oviposition of the phloem-feeding insect cabbage whitefly (Aleyrodes proletella). This chain is Dimethylnonatriene synthase, found in Arabidopsis thaliana (Mouse-ear cress).